The sequence spans 288 residues: Phenazine biosynthesis-like domain-containing protein (288 aa).

Glu46 is an active-site residue.

Belongs to the PhzF family. As to quaternary structure, interacts with UNRIP/MAWD.

The protein is Phenazine biosynthesis-like domain-containing protein (Pbld) of Rattus norvegicus (Rat).